We begin with the raw amino-acid sequence, 427 residues long: Serine hydroxymethyltransferase (427 aa).

Residues leucine 122 and 126–128 (GHL) each bind (6S)-5,6,7,8-tetrahydrofolate. Lysine 231 carries the post-translational modification N6-(pyridoxal phosphate)lysine. (6S)-5,6,7,8-tetrahydrofolate-binding positions include glutamate 247 and 355–357 (SPF).

This sequence belongs to the SHMT family. Homodimer. Pyridoxal 5'-phosphate is required as a cofactor.

The protein localises to the cytoplasm. It carries out the reaction (6R)-5,10-methylene-5,6,7,8-tetrahydrofolate + glycine + H2O = (6S)-5,6,7,8-tetrahydrofolate + L-serine. The protein operates within one-carbon metabolism; tetrahydrofolate interconversion. It functions in the pathway amino-acid biosynthesis; glycine biosynthesis; glycine from L-serine: step 1/1. Catalyzes the reversible interconversion of serine and glycine with tetrahydrofolate (THF) serving as the one-carbon carrier. This reaction serves as the major source of one-carbon groups required for the biosynthesis of purines, thymidylate, methionine, and other important biomolecules. Also exhibits THF-independent aldolase activity toward beta-hydroxyamino acids, producing glycine and aldehydes, via a retro-aldol mechanism. This Synechocystis sp. (strain ATCC 27184 / PCC 6803 / Kazusa) protein is Serine hydroxymethyltransferase.